The following is a 475-amino-acid chain: Glutamate--tRNA ligase (475 aa).

A 'HIGH' region motif is present at residues 11–21; sequence PSPTGFLHIGG. Residues 240-244 carry the 'KMSKS' region motif; it reads KLSKR. ATP is bound at residue lysine 243.

The protein belongs to the class-I aminoacyl-tRNA synthetase family. Glutamate--tRNA ligase type 1 subfamily. Monomer.

The protein localises to the cytoplasm. The enzyme catalyses tRNA(Glu) + L-glutamate + ATP = L-glutamyl-tRNA(Glu) + AMP + diphosphate. In terms of biological role, catalyzes the attachment of glutamate to tRNA(Glu) in a two-step reaction: glutamate is first activated by ATP to form Glu-AMP and then transferred to the acceptor end of tRNA(Glu). The protein is Glutamate--tRNA ligase of Bradyrhizobium diazoefficiens (strain JCM 10833 / BCRC 13528 / IAM 13628 / NBRC 14792 / USDA 110).